The following is an 892-amino-acid chain: Integrator complex subunit 6 (892 aa).

The region spanning 3-227 (ILLFLIDTSA…QCLESLVQKV (225 aa)) is the VWFA domain. Residues 630-637 (MMIDEADE) carry the Inhibitory loop motif. 3 disordered regions span residues 665–692 (MSPL…GTQG), 711–754 (VGGT…AAPD), and 771–793 (PDHT…EVNE).

It belongs to the Integrator subunit 6 family. In terms of assembly, component of the Integrator complex, composed of core subunits INTS1, INTS2, INTS3, INTS4, INTS5, INTS6, INTS7, INTS8, INTS9/RC74, INTS10, INTS11/CPSF3L, INTS12, INTS13, INTS14 and INTS15. The core complex associates with protein phosphatase 2A subunits PPP2CA and PPP2R1A, to form the Integrator-PP2A (INTAC) complex.

The protein localises to the nucleus. It is found in the chromosome. Functionally, component of the integrator complex, a multiprotein complex that terminates RNA polymerase II (Pol II) transcription in the promoter-proximal region of genes. The integrator complex provides a quality checkpoint during transcription elongation by driving premature transcription termination of transcripts that are unfavorably configured for transcriptional elongation: the complex terminates transcription by (1) catalyzing dephosphorylation of the C-terminal domain (CTD) of Pol II subunit POLR2A/RPB1 and SUPT5H/SPT5, (2) degrading the exiting nascent RNA transcript via endonuclease activity and (3) promoting the release of Pol II from bound DNA. The integrator complex is also involved in terminating the synthesis of non-coding Pol II transcripts, such as enhancer RNAs (eRNAs), small nuclear RNAs (snRNAs), telomerase RNAs and long non-coding RNAs (lncRNAs). Within the integrator complex, INTS6 acts as a molecular adapter that promotes assembly of protein phosphatase 2A (PP2A) subunits to the integrator core complex, promoting recruitment of PP2A to transcription pause-release checkpoint. This chain is Integrator complex subunit 6 (ints6l), found in Danio rerio (Zebrafish).